The following is a 50-amino-acid chain: MAQKKASLACTECGSRNYSIGVSSTPKPTRLEVNKFCKYCKKYTIHKETR.

The protein belongs to the bacterial ribosomal protein bL33 family.

The sequence is that of Large ribosomal subunit protein bL33B from Streptococcus agalactiae serotype V (strain ATCC BAA-611 / 2603 V/R).